The sequence spans 138 residues: Phosphoribosyl-AMP cyclohydrolase (138 aa).

A Mg(2+)-binding site is contributed by aspartate 84. Cysteine 85 contributes to the Zn(2+) binding site. Aspartate 86 and aspartate 88 together coordinate Mg(2+). Positions 102 and 109 each coordinate Zn(2+).

It belongs to the PRA-CH family. Homodimer. It depends on Mg(2+) as a cofactor. The cofactor is Zn(2+).

Its subcellular location is the cytoplasm. It carries out the reaction 1-(5-phospho-beta-D-ribosyl)-5'-AMP + H2O = 1-(5-phospho-beta-D-ribosyl)-5-[(5-phospho-beta-D-ribosylamino)methylideneamino]imidazole-4-carboxamide. Its pathway is amino-acid biosynthesis; L-histidine biosynthesis; L-histidine from 5-phospho-alpha-D-ribose 1-diphosphate: step 3/9. Catalyzes the hydrolysis of the adenine ring of phosphoribosyl-AMP. This chain is Phosphoribosyl-AMP cyclohydrolase, found in Burkholderia multivorans (strain ATCC 17616 / 249).